Here is a 116-residue protein sequence, read N- to C-terminus: Flagellar transcriptional regulator FlhD (116 aa).

It belongs to the FlhD family. Homodimer; disulfide-linked. Forms a heterohexamer composed of two FlhC and four FlhD subunits. Each FlhC binds a FlhD dimer, forming a heterotrimer, and a hexamer assembles by dimerization of two heterotrimers.

It localises to the cytoplasm. Its function is as follows. Functions in complex with FlhC as a master transcriptional regulator that regulates transcription of several flagellar and non-flagellar operons by binding to their promoter region. Activates expression of class 2 flagellar genes, including fliA, which is a flagellum-specific sigma factor that turns on the class 3 genes. Also regulates genes whose products function in a variety of physiological pathways. The chain is Flagellar transcriptional regulator FlhD from Salmonella arizonae (strain ATCC BAA-731 / CDC346-86 / RSK2980).